Here is a 144-residue protein sequence, read N- to C-terminus: MELNNLKPAEGAKHAKRRVGRGIGSGLGKTAGRGHKGQKSRSGGFHKVGFEGGQMPLQRRLPKRGFTSLTKEFVGEVRLGDLEKLPVDEVDLLALKQAGLVGELTKSAKIIATGELKRKIVVKGLGATKGARAAIEAAGGSFAE.

The disordered stretch occupies residues 1–59; sequence MELNNLKPAEGAKHAKRRVGRGIGSGLGKTAGRGHKGQKSRSGGFHKVGFEGGQMPLQR. Residues 21–31 are compositionally biased toward gly residues; it reads RGIGSGLGKTA.

The protein belongs to the universal ribosomal protein uL15 family. As to quaternary structure, part of the 50S ribosomal subunit.

Functionally, binds to the 23S rRNA. In Burkholderia thailandensis (strain ATCC 700388 / DSM 13276 / CCUG 48851 / CIP 106301 / E264), this protein is Large ribosomal subunit protein uL15.